The primary structure comprises 202 residues: Probable GTP-binding protein EngB (202 aa).

The 176-residue stretch at 22–197 (VFPEYAFIGR…LDYIENISKE (176 aa)) folds into the EngB-type G domain. Residues 30-37 (GRSNVGKS), 57-61 (GKTML), 75-78 (DLPG), 142-145 (TKAD), and 173-178 (YFISSS) contribute to the GTP site. Residues serine 37 and threonine 59 each coordinate Mg(2+).

It belongs to the TRAFAC class TrmE-Era-EngA-EngB-Septin-like GTPase superfamily. EngB GTPase family. The cofactor is Mg(2+).

Its function is as follows. Necessary for normal cell division and for the maintenance of normal septation. This chain is Probable GTP-binding protein EngB, found in Bacteroides thetaiotaomicron (strain ATCC 29148 / DSM 2079 / JCM 5827 / CCUG 10774 / NCTC 10582 / VPI-5482 / E50).